A 130-amino-acid chain; its full sequence is Ribosome-binding factor A (130 aa).

It belongs to the RbfA family. In terms of assembly, monomer. Binds 30S ribosomal subunits, but not 50S ribosomal subunits or 70S ribosomes.

It is found in the cytoplasm. One of several proteins that assist in the late maturation steps of the functional core of the 30S ribosomal subunit. Associates with free 30S ribosomal subunits (but not with 30S subunits that are part of 70S ribosomes or polysomes). Required for efficient processing of 16S rRNA. May interact with the 5'-terminal helix region of 16S rRNA. This Prochlorococcus marinus (strain MIT 9301) protein is Ribosome-binding factor A.